The chain runs to 295 residues: 4-diphosphocytidyl-2-C-methyl-D-erythritol kinase (295 aa).

Lys22 is an active-site residue. An ATP-binding site is contributed by 106 to 116 (PAGGGFGGGSS). Residue Asp148 is part of the active site.

Belongs to the GHMP kinase family. IspE subfamily.

The enzyme catalyses 4-CDP-2-C-methyl-D-erythritol + ATP = 4-CDP-2-C-methyl-D-erythritol 2-phosphate + ADP + H(+). It participates in isoprenoid biosynthesis; isopentenyl diphosphate biosynthesis via DXP pathway; isopentenyl diphosphate from 1-deoxy-D-xylulose 5-phosphate: step 3/6. Its function is as follows. Catalyzes the phosphorylation of the position 2 hydroxy group of 4-diphosphocytidyl-2C-methyl-D-erythritol. The polypeptide is 4-diphosphocytidyl-2-C-methyl-D-erythritol kinase (Xanthomonas oryzae pv. oryzae (strain MAFF 311018)).